The primary structure comprises 438 residues: Glutaryl-CoA dehydrogenase, mitochondrial (438 aa).

Residues 1–44 (MALRGVSVRLLSRGPGLHVLRTWVSSAAQTEKGGRTQSQLAKSS) constitute a mitochondrion transit peptide. Substrate is bound by residues 138–139 (RS) and serine 186. FAD-binding positions include 177–186 (FGLTEPNSGS) and 212–214 (WIT). Lysine 240 is modified (N6-acetyllysine). 287-294 (FGCLNNAR) is a substrate binding site. Residues arginine 319, glutamine 330, and 387 to 391 (DMLGG) contribute to the FAD site. The active-site Proton acceptor is glutamate 414. Glycine 415 is a substrate binding site. FAD is bound by residues 416–418 (THD) and phenylalanine 434.

This sequence belongs to the acyl-CoA dehydrogenase family. In terms of assembly, homotetramer. FAD serves as cofactor. In terms of tissue distribution, isoform Long and isoform Short are expressed in fibroblasts and liver.

It is found in the mitochondrion matrix. It carries out the reaction glutaryl-CoA + oxidized [electron-transfer flavoprotein] + 2 H(+) = (2E)-butenoyl-CoA + reduced [electron-transfer flavoprotein] + CO2. It participates in amino-acid metabolism; lysine degradation. Its pathway is amino-acid metabolism; tryptophan metabolism. Strongly inhibited by MCPA-CoA, a metabolite of hypoglycin which is present in unripened fruit of the ackee tree. Functionally, catalyzes the oxidative decarboxylation of glutaryl-CoA to crotonyl-CoA and CO(2) in the degradative pathway of L-lysine, L-hydroxylysine, and L-tryptophan metabolism. It uses electron transfer flavoprotein as its electron acceptor. Isoform Short is inactive. This Homo sapiens (Human) protein is Glutaryl-CoA dehydrogenase, mitochondrial (GCDH).